A 295-amino-acid chain; its full sequence is UDP-N-acetylenolpyruvoylglucosamine reductase (295 aa).

Residues 24–188 (KVGGNAEIFF…LKVVFKINKG (165 aa)) enclose the FAD-binding PCMH-type domain. The active site involves arginine 168. Catalysis depends on serine 217, which acts as the Proton donor. Glutamate 287 is an active-site residue.

It belongs to the MurB family. Requires FAD as cofactor.

Its subcellular location is the cytoplasm. It catalyses the reaction UDP-N-acetyl-alpha-D-muramate + NADP(+) = UDP-N-acetyl-3-O-(1-carboxyvinyl)-alpha-D-glucosamine + NADPH + H(+). The protein operates within cell wall biogenesis; peptidoglycan biosynthesis. Functionally, cell wall formation. In Rickettsia peacockii (strain Rustic), this protein is UDP-N-acetylenolpyruvoylglucosamine reductase.